We begin with the raw amino-acid sequence, 1610 residues long: NHS-like protein 1 (1610 aa).

S24 is modified (phosphoserine). The tract at residues 145–169 is disordered; it reads SPFCDDYQDEDEETDQKCSLSSSEE. S198 and S328 each carry phosphoserine. The segment covering 433-448 has biased composition (polar residues); the sequence is TAQSAGQRESKSSGSS. Disordered regions lie at residues 433-477 and 531-602; these read TAQS…HWNE and PAHP…DAGS. S568 carries the phosphoserine modification. The span at 578–594 shows a compositional bias: polar residues; sequence GYSTPTSNMSSCSLDQT. S639 carries the post-translational modification Phosphoserine. The span at 649–667 shows a compositional bias: polar residues; the sequence is QKNQGDRSNYQDKSLSRNI. Disordered regions lie at residues 649-693, 715-778, 791-981, 997-1535, and 1566-1610; these read QKNQ…KKSS, SLPG…SVKS, TGMQ…PPPE, PRPA…GEGE, and EGGL…SEES. Residues 715–730 are compositionally biased toward low complexity; sequence SLPGKSGSSPSQSPCS. 3 stretches are compositionally biased toward polar residues: residues 740-760, 767-778, and 851-865; these read SRSQ…TPNV, TPSQSDTSSVKS, and SPSS…TPTA. Residues 895–928 are compositionally biased toward low complexity; the sequence is SLISSVSISSSSTSLSSSTSTEGSGTMKKLDPAV. Composition is skewed to pro residues over residues 929–946 and 970–981; these read GSPP…PFPC and PHSPVFPPPPPE. Positions 1001-1011 are enriched in low complexity; it reads LSPILPDSPVS. Pro residues predominate over residues 1012 to 1031; that stretch reads LPLPPPLLPSSEPPPAPPLD. Positions 1041 to 1053 are enriched in polar residues; the sequence is PFTNSGQPESSRG. The residue at position 1089 (S1089) is a Phosphoserine. The segment covering 1122–1153 has biased composition (polar residues); the sequence is SRNSTNEMESESQPASVTSSLPTPAKSSSQGD. At S1167 the chain carries Phosphoserine. The span at 1180-1193 shows a compositional bias: low complexity; sequence PSPSTTPLPDSSPS. Residue S1233 is modified to Phosphoserine. Composition is skewed to basic and acidic residues over residues 1240 to 1249 and 1373 to 1383; these read GSVHSREAKE and GRRDSDDDHSR. Residues S1386 and S1388 each carry the phosphoserine modification. A Phosphothreonine modification is found at T1392. Residues 1405–1422 are compositionally biased toward polar residues; the sequence is QVGSIQRSIRKSSTSSDN. The span at 1447–1460 shows a compositional bias: basic and acidic residues; that stretch reads KNTDPRFQRSRSEP. Low complexity-rich tracts occupy residues 1461-1474 and 1504-1516; these read SPDA…CSPS and SRTP…SRYS.

It belongs to the NHS family. Widely expressed. Expressed in adult and fetal brain, fetal eyes, adult lens, kidney, liver and intestine.

This is NHS-like protein 1 (NHSL1) from Homo sapiens (Human).